We begin with the raw amino-acid sequence, 156 residues long: Hemerythrin-like protein (156 aa).

Fe cation-binding residues include His54, His84, Glu88, His109, His113, His142, and Asp147.

The protein belongs to the hemerythrin family.

Functionally, oxygen-binding protein. The oxygen-binding site contains two iron atoms. The chain is Hemerythrin-like protein from Nematostella vectensis (Starlet sea anemone).